Here is a 381-residue protein sequence, read N- to C-terminus: Actin-binding Rho-activating protein (381 aa).

2 disordered regions span residues 39-156 and 179-207; these read ENSI…SHGS and QEEPTWRSDSVDTEDSGYGGEAEERPEQD. The span at 69–79 shows a compositional bias: polar residues; it reads PTSHQKAQSAP. Residues 97 to 110 show a composition bias toward basic and acidic residues; that stretch reads KAPEVSHIKKKEVS. Residues Ser156 and Ser188 each carry the phosphoserine modification. Residues 179-188 show a composition bias toward basic and acidic residues; the sequence is QEEPTWRSDS. 2 actin-binding regions span residues 199–299 and 300–381; these read EAEE…AERA and KRAE…TLLK. Interaction with actin regions lie at residues 240–285 and 352–381; these read SPVG…GDEG and MRARKHGLVDFEGEMLWQGRDDHVVITLLK.

Binds F-actin and ABLIM1, ABLIM2 and ABLIM3. Interaction with ABLIM2 and ABLIM3 enhances activity.

The protein localises to the cytoplasm. It localises to the myofibril. It is found in the sarcomere. The protein resides in the cytoskeleton. Acts as an activator of serum response factor (SRF)-dependent transcription possibly by inducing nuclear translocation of MKL1 or MKL2 and through a mechanism requiring Rho-actin signaling. This is Actin-binding Rho-activating protein from Homo sapiens (Human).